The following is a 154-amino-acid chain: MVKAVAVLRGDSKVSGTVTFEQADENSNTTVSWNITGNDPNAERGFHIHQFGDNTNGCTSAGPHFNPFGKTHGAPEDEVRHVGDLGNFKTDAEGNSKGSKTDKLIKLIGAESVLGRTLVVHAGTDDLGRGDSEESKKTGNAGARPACGVIGIAA.

His-47, His-49, and His-64 together coordinate Cu cation. A disulfide bridge connects residues Cys-58 and Cys-147. Zn(2+)-binding residues include His-64, His-72, His-81, and Asp-84. His-121 is a Cu cation binding site. Over residues 124–137 (TDDLGRGDSEESKK) the composition is skewed to basic and acidic residues. Positions 124 to 144 (TDDLGRGDSEESKKTGNAGAR) are disordered. Residue Arg-144 coordinates substrate.

Belongs to the Cu-Zn superoxide dismutase family. In terms of assembly, homodimer. The cofactor is Cu cation. Zn(2+) is required as a cofactor.

It localises to the cytoplasm. It catalyses the reaction 2 superoxide + 2 H(+) = H2O2 + O2. Functionally, destroys radicals which are normally produced within the cells and which are toxic to biological systems. This chain is Superoxide dismutase [Cu-Zn] (sodA), found in Emericella nidulans (strain FGSC A4 / ATCC 38163 / CBS 112.46 / NRRL 194 / M139) (Aspergillus nidulans).